The primary structure comprises 485 residues: MSEYPKKRKRKTLHPSRYSDSSGISRIADGVSGIFSDHCYSVCSMRQPDLKYFDNKDDDSDPETANDLPKFTDGTKARSRSQSCLVPSPVLRILEHTVFSTEKPADVEICDEECGSPESGHQHTHEESPIEVHTSEDVPIAVEVHAISEDYDIEAENNSSESLLDQTDEEPPAKLCKILDKSQASNVTAQQKWPLLRANSSGLYKCELCEFNSKYFSDLKQHVILKHKRTDSNVCRVCKESFSTNMLLIEHAKLHEEDPYICKYCDYKTVIFENLSQHIADTHFSDHLYWCEQCDVQFSSSSELYLHFQEHSRDEQYLCQFCEHETGDPEDLHSHVVNEHARRLIELSDKCGSGGHGQCSLLSKITFDKCKNFFVCQVCGFRSRLHTNVNRHVAIEHTKIFPHVCDDCGKGFSSMLEYCKHLNSHLSEGIYLCQYCEYSTGQIEDLKIHLDFKHSADLPHKCSDCLMRFGNERELISHLPVHETT.

A compositionally biased stretch (basic residues) spans 1-14 (MSEYPKKRKRKTLH). Disordered stretches follow at residues 1–23 (MSEY…DSSG) and 54–82 (DNKD…SRSQ). At Ser60 the chain carries Phosphoserine. Residue Lys76 forms a Glycyl lysine isopeptide (Lys-Gly) (interchain with G-Cter in SUMO2) linkage. A Phosphoserine modification is found at Ser88. Residues Lys177, Lys181, and Lys226 each participate in a glycyl lysine isopeptide (Lys-Gly) (interchain with G-Cter in SUMO2) cross-link. C2H2-type zinc fingers lie at residues 204–227 (YKCE…ILKH), 233–255 (NVCR…AKLH), 260–283 (YICK…ADTH), 289–311 (YWCE…FQEH), 374–397 (FVCQ…AIEH), 403–425 (HVCD…LNSH), 431–454 (YLCQ…DFKH), and 460–482 (HKCS…LPVH). The segment at 371–455 (KNFFVCQVCG…LKIHLDFKHS (85 aa)) is interaction with CTNNA2.

The protein belongs to the krueppel C2H2-type zinc-finger protein family. In terms of assembly, interacts with CTNNA2.

Its subcellular location is the nucleus. Functionally, binds DNA and may function as a transcriptional repressor. This Rattus norvegicus (Rat) protein is Zinc finger protein 639 (Znf639).